The chain runs to 206 residues: Large ribosomal subunit protein uL4 (206 aa).

The segment covering Q66–A77 has biased composition (basic residues). The tract at residues Q66–H96 is disordered.

The protein belongs to the universal ribosomal protein uL4 family. In terms of assembly, part of the 50S ribosomal subunit.

Functionally, one of the primary rRNA binding proteins, this protein initially binds near the 5'-end of the 23S rRNA. It is important during the early stages of 50S assembly. It makes multiple contacts with different domains of the 23S rRNA in the assembled 50S subunit and ribosome. Forms part of the polypeptide exit tunnel. This Brucella anthropi (strain ATCC 49188 / DSM 6882 / CCUG 24695 / JCM 21032 / LMG 3331 / NBRC 15819 / NCTC 12168 / Alc 37) (Ochrobactrum anthropi) protein is Large ribosomal subunit protein uL4.